Here is a 639-residue protein sequence, read N- to C-terminus: Kinesin-like protein KIF22 (639 aa).

The Kinesin motor domain occupies 18-345 (RVRVAVRLRP…LNFAAKSKQI (328 aa)). 102-109 (GPTGAGKT) contacts ATP. The tract at residues 358–400 (IAALPAMKRPREEAETAAGSRQRKKSKTDSTESSPNTSMDAAS) is disordered. The segment covering 388–397 (TESSPNTSMD) has biased composition (polar residues). The stretch at 439–484 (KRERMALLKKWEESQMEIERLKEKQKELEQKAIEAEARLEKSTNSD) forms a coiled coil. Positions 549-552 (GREN) match the Important for regulated proteolytic degradation motif.

It belongs to the TRAFAC class myosin-kinesin ATPase superfamily. Kinesin family. Post-translationally, ubiquitinated, leading to its subsequent proteasomal degradation.

It localises to the nucleus. It is found in the cytoplasm. The protein resides in the cytoskeleton. Functionally, kinesin family member that is involved in spindle formation and the movements of chromosomes during mitosis and meiosis. Binds to microtubules and to DNA. The chain is Kinesin-like protein KIF22 (kif22) from Xenopus tropicalis (Western clawed frog).